A 310-amino-acid polypeptide reads, in one-letter code: Atrochrysone carboxyl ACP thioesterase CPUR_05436 (310 aa).

His-105, His-107, Asp-109, and His-110 together coordinate Zn(2+). The active-site Proton donor/acceptor is the Asp-109.

It belongs to the metallo-beta-lactamase superfamily. The cofactor is Zn(2+).

It catalyses the reaction atrochrysone carboxyl-[ACP] + H2O = atrochrysone carboxylate + holo-[ACP] + H(+). It participates in pigment biosynthesis. Functionally, atrochrysone carboxyl ACP thioesterase; part of the ergochrome gene cluster responsible for the typical purple-black color of the ergot sclerotia. The ergochrome gene cluster produces several ergot pigments including the yellow ergochrome secalonic acid and its derivatives, as well as the red anthraquinones endocrocin and clavorubin. The pathway begins with the synthesis of atrochrysone thioester by the polyketide synthase (PKS) CPUR_05437. The atrochrysone carboxyl ACP thioesterase CPUR_05436 then breaks the thioester bond and releases the atrochrysone carboxylic acid from CPUR_05437. The atrochrysone carboxylic acid is then converted to atrochrysone which is further transformed into emodin anthrone. The next step is performed by the anthrone oxygenase CPUR_05434 that catalyzes the oxidation of emodinanthrone to emodin. Emodin is further modified to yield monodictyphenone via several steps involving CPUR_05427, CPUR_05428, CPUR_05429 and CPUR_05430. The short chain dehydrogenase/reductase CPUR_05418 then catalyzes the C-5 ketoreduction to give the xanthone skeleton of the monomeric units. Ergochromes formation requires further dimerization steps of different xanthone units, probably catalyzed by the cytochrome P450 monooxygenase CPUR_05419. CPUR_05425, CPUR_05426 and CPUR_05431 are unique to Claviceps, thus it is likely that they are involved in further modification of xanthone units or in their dimerization. The yellow ergochromes and the red anthraquinone pigments endocrocin and clavorubin are products from the same PKS derived precursors and the latter are likely shunt products in the pathway of xanthone biosynthesis. It is proposed that atrochrysone carboxylic acid released from the PKS CPUR_05437 can also be converted to endocrocin anthrone which is further oxidized into endocrocin by CPUR_05435. Endocrocin could be then modified to clavorubin, possibly by CPUR_05423 and CPUR_05431. Clavorubin is the principal anthraquinone metabolite produced by the cluster with a much higher yield compared to endocrocin. This Claviceps purpurea (strain 20.1) (Ergot fungus) protein is Atrochrysone carboxyl ACP thioesterase CPUR_05436.